Consider the following 498-residue polypeptide: ATP synthase subunit beta, chloroplastic (498 aa).

G172 to T179 is an ATP binding site.

It belongs to the ATPase alpha/beta chains family. As to quaternary structure, F-type ATPases have 2 components, CF(1) - the catalytic core - and CF(0) - the membrane proton channel. CF(1) has five subunits: alpha(3), beta(3), gamma(1), delta(1), epsilon(1). CF(0) has four main subunits: a(1), b(1), b'(1) and c(9-12).

Its subcellular location is the plastid. The protein localises to the chloroplast thylakoid membrane. The catalysed reaction is ATP + H2O + 4 H(+)(in) = ADP + phosphate + 5 H(+)(out). Produces ATP from ADP in the presence of a proton gradient across the membrane. The catalytic sites are hosted primarily by the beta subunits. This Buxus microphylla (Littleleaf boxwood) protein is ATP synthase subunit beta, chloroplastic.